Reading from the N-terminus, the 132-residue chain is Sec-independent protein translocase protein TatB (132 aa).

A helical membrane pass occupies residues 1 to 21; that stretch reads MFDIGFWELVLISVVGLVVLG. The interval 70–132 is disordered; that stretch reads GMEDLSPELK…KVSAADKKAE (63 aa). Composition is skewed to basic and acidic residues over residues 96-108 and 115-132; these read YADK…ETAK and SAEK…KKAE.

It belongs to the TatB family. In terms of assembly, the Tat system comprises two distinct complexes: a TatABC complex, containing multiple copies of TatA, TatB and TatC subunits, and a separate TatA complex, containing only TatA subunits. Substrates initially bind to the TatABC complex, which probably triggers association of the separate TatA complex to form the active translocon.

It is found in the cell inner membrane. Part of the twin-arginine translocation (Tat) system that transports large folded proteins containing a characteristic twin-arginine motif in their signal peptide across membranes. Together with TatC, TatB is part of a receptor directly interacting with Tat signal peptides. TatB may form an oligomeric binding site that transiently accommodates folded Tat precursor proteins before their translocation. The chain is Sec-independent protein translocase protein TatB from Vibrio parahaemolyticus serotype O3:K6 (strain RIMD 2210633).